A 638-amino-acid polypeptide reads, in one-letter code: Threonine--tRNA ligase (638 aa).

The region spanning M1–T61 is the TGS domain. Residues D242–P533 are catalytic. The Zn(2+) site is built by C333, H384, and H510.

This sequence belongs to the class-II aminoacyl-tRNA synthetase family. Homodimer. Requires Zn(2+) as cofactor.

The protein localises to the cytoplasm. It carries out the reaction tRNA(Thr) + L-threonine + ATP = L-threonyl-tRNA(Thr) + AMP + diphosphate + H(+). Its function is as follows. Catalyzes the attachment of threonine to tRNA(Thr) in a two-step reaction: L-threonine is first activated by ATP to form Thr-AMP and then transferred to the acceptor end of tRNA(Thr). Also edits incorrectly charged L-seryl-tRNA(Thr). The protein is Threonine--tRNA ligase of Prochlorococcus marinus (strain MIT 9301).